Consider the following 415-residue polypeptide: ATP-dependent Clp protease ATP-binding subunit ClpX (415 aa).

The ClpX-type ZB domain occupies 1–52; sequence MAESKNNKKRCSFCGRSENEVGFLITGMNGYICDSCATQAYEITQEAMGAGK. The Zn(2+) site is built by Cys-11, Cys-14, Cys-33, and Cys-36. 121 to 128 serves as a coordination point for ATP; the sequence is STGTGKTL.

This sequence belongs to the ClpX chaperone family. As to quaternary structure, component of the ClpX-ClpP complex. Forms a hexameric ring that, in the presence of ATP, binds to fourteen ClpP subunits assembled into a disk-like structure with a central cavity, resembling the structure of eukaryotic proteasomes.

In terms of biological role, ATP-dependent specificity component of the Clp protease. It directs the protease to specific substrates. Can perform chaperone functions in the absence of ClpP. In Bacteroides fragilis (strain ATCC 25285 / DSM 2151 / CCUG 4856 / JCM 11019 / LMG 10263 / NCTC 9343 / Onslow / VPI 2553 / EN-2), this protein is ATP-dependent Clp protease ATP-binding subunit ClpX.